The following is a 211-amino-acid chain: Dual specificity protein phosphatase 26 (211 aa).

Residues 60-207 (NHADEVWPGL…LLALDRRLRQ (148 aa)) form the Tyrosine-protein phosphatase domain. Cys152 serves as the catalytic Phosphocysteine intermediate.

This sequence belongs to the protein-tyrosine phosphatase family. Non-receptor class dual specificity subfamily. In terms of assembly, interacts with HSF4.

The protein localises to the cytoplasm. Its subcellular location is the nucleus. It localises to the golgi apparatus. It catalyses the reaction O-phospho-L-tyrosyl-[protein] + H2O = L-tyrosyl-[protein] + phosphate. It carries out the reaction O-phospho-L-seryl-[protein] + H2O = L-seryl-[protein] + phosphate. The catalysed reaction is O-phospho-L-threonyl-[protein] + H2O = L-threonyl-[protein] + phosphate. Inactivates MAPK1 and MAPK3 which leads to dephosphorylation of heat shock factor protein 4 and a reduction in its DNA-binding activity. This is Dual specificity protein phosphatase 26 (Dusp26) from Rattus norvegicus (Rat).